A 310-amino-acid polypeptide reads, in one-letter code: MKGQQKTAETEEGTVQIQEGAVATGEDPTSVAIASIQSAATFPDPNVKYVFRTENGGQVMYRVIQVSEGQLDGQTEGTGAISGYPATQSMTQAVIQGAFTSDDTVDTEGTAAETHYTYFPSTAVGDGAGGTTSGSTAAVVTTQGSEALLGQATPPGTGQFFVMMSPQEVLQGGSQRSIAPRTHPYSPKSAAPRTTRDEKRRAQHNEVERRRRDKINNWIVQLSKIIPDCSMESTKSGQSKGGILSKACDYIQELRQSNHRLSEELQGLDQLQLDNDVLRQQVEDLKNKNLLLRAQLRHHGLEVVIKNDSN.

Residues 1-17 (MKGQQKTAETEEGTVQI) show a composition bias toward polar residues. Disordered stretches follow at residues 1–26 (MKGQ…ATGE) and 171–209 (QGGS…EVER). The segment covering 194 to 209 (TTRDEKRRAQHNEVER) has biased composition (basic and acidic residues). Positions 199-254 (KRRAQHNEVERRRRDKINNWIVQLSKIIPDCSMESTKSGQSKGGILSKACDYIQEL) constitute a bHLH domain. The tract at residues 271-292 (LQLDNDVLRQQVEDLKNKNLLL) is leucine-zipper. A Glycyl lysine isopeptide (Lys-Gly) (interchain with G-Cter in SUMO2) cross-link involves residue lysine 306.

Efficient DNA binding requires dimerization with another bHLH protein. Binds DNA as a homodimer or a heterodimer (USF1/USF2).

The protein localises to the nucleus. Its function is as follows. Transcription factor that binds to a symmetrical DNA sequence (E-boxes) (5'-CACGTG-3') that is found in a variety of viral and cellular promoters. Regulates the expression of the surfactant protein-A (SP-A) gene. This is Upstream stimulatory factor 1 (USF1) from Oryctolagus cuniculus (Rabbit).